Consider the following 426-residue polypeptide: Protein FAM124B (426 aa).

The protein belongs to the FAM124 family.

It is found in the nucleus. The chain is Protein FAM124B (fam124b) from Xenopus tropicalis (Western clawed frog).